Reading from the N-terminus, the 555-residue chain is WRKY transcription factor WRKY24 (555 aa).

Disordered regions lie at residues 133–183 (TAPA…AGAN) and 197–248 (SEMA…CTFP). Low complexity predominate over residues 163–183 (QQQQQPWGYQQQPAGMDAGAN). Residues 214–278 (SQRRSSDDGY…YKGTHNHAKP (65 aa)) constitute a DNA-binding region (WRKY 1). Residues 253 to 259 (KKKVERS) carry the Nuclear localization signal motif. The interval 270–365 (KGTHNHAKPQ…DGEGISMAGN (96 aa)) is disordered. 2 stretches are compositionally biased toward polar residues: residues 277–294 (KPQN…QVLQ) and 310–320 (TAATPENSSAS). Basic and acidic residues predominate over residues 347-356 (DSKRWRKDGD). Residues 379–444 (SDIDILDDGY…YEGKHNHDVP (66 aa)) constitute a DNA-binding region (WRKY 2). The transcription repression of gibberellic acid (GA)-induced promoters stretch occupies residues 466 to 555 (HPYLPNQPPP…DDMFFQNSLY (90 aa)). Residues 514 to 555 (FDDARGSYMSQHQQQQRQNDAMHASRAKEEPGDDMFFQNSLY) are disordered.

It belongs to the WRKY group II-a family. In terms of tissue distribution, expressed in aleurone cells. Mostly expressed in aleurone layers and leaves, and, to a lower extent, in roots, panicles and embryos.

The protein resides in the nucleus. Transcription activator. Interacts specifically with the W box (5'-(T)TGAC[CT]-3'), a frequently occurring elicitor-responsive cis-acting element. Negative regulator of both gibberellic acid (GA) and abscisic acid (ABA) signaling in aleurone cells, probably by interfering with GAM1, via the specific repression of GA- and ABA-induced promoters. This Oryza sativa subsp. japonica (Rice) protein is WRKY transcription factor WRKY24.